A 582-amino-acid chain; its full sequence is Enhancer of polycomb-like protein 1 (582 aa).

A coiled-coil region spans residues 238–295 (RDAQSADKLRRLRKELEDARQLVALVRQRELARKEMLSMERQIFLQRSEVKEMKRKLN). A disordered region spans residues 323–351 (PEQPKKKPAEAPAAQRPTAPQIRMPQKPG). Positions 352–385 (TQAADDMQLLEDVQAEKENEILRDIKQNIAKHIK) form a coiled coil. Residues 539–555 (AQAHAQAQAQKRLQAEQ) show a composition bias toward low complexity. The segment at 539 to 582 (AQAHAQAQAQKRLQAEQTTTNNGPPNIGHTMGSNPGPGAVASTS) is disordered.

It belongs to the enhancer of polycomb family. As to quaternary structure, component of the NuA4 histone acetyltransferase complex.

It localises to the nucleus. In terms of biological role, component of the NuA4 histone acetyltransferase complex which is involved in transcriptional activation of selected genes principally by acetylation of nucleosomal histone H4 and H2A. The NuA4 complex is also involved in DNA repair. Involved in gene silencing by neighboring heterochromatin, blockage of the silencing spreading along the chromosome, and required for cell cycle progression through G2/M. The protein is Enhancer of polycomb-like protein 1 (epl1) of Aspergillus fumigatus (strain ATCC MYA-4609 / CBS 101355 / FGSC A1100 / Af293) (Neosartorya fumigata).